We begin with the raw amino-acid sequence, 520 residues long: Pleckstrin homology domain-containing family A member 8 (520 aa).

The 93-residue stretch at 1–93 (MEGVLYKWTN…WLVALGSAKA (93 aa)) folds into the PH domain. T139 carries the post-translational modification Phosphothreonine. S145 bears the Phosphoserine mark. Residue T153 is modified to Phosphothreonine. A compositionally biased stretch (basic and acidic residues) spans 275–285 (GEESLGNHDSD). Residues 275 to 305 (GEESLGNHDSDLAQPELHSTSSSPESHWEED) form a disordered region. The segment at 311-520 (TFFSTMNTSF…VHGLESDEVV (210 aa)) is glycolipid transfer protein homology domain.

Homodimer. Interacts with ARF1; the interaction together with phosphatidylinositol 4-phosphate binding is required for FAPP2 GlcCer transfer ability.

The protein resides in the cytoplasm. The protein localises to the golgi apparatus. Its subcellular location is the trans-Golgi network membrane. It is found in the membrane. In terms of biological role, cargo transport protein that is required for apical transport from the trans-Golgi network (TGN). Transports AQP2 from the trans-Golgi network (TGN) to sites of AQP2 phosphorylation. Mediates the non-vesicular transport of glucosylceramide (GlcCer) from the trans-Golgi network (TGN) to the plasma membrane and plays a pivotal role in the synthesis of complex glycosphingolipids. Binding of both phosphatidylinositol 4-phosphate (PIP) and ARF1 are essential for the GlcCer transfer ability. Also required for primary cilium formation, possibly by being involved in the transport of raft lipids to the apical membrane, and for membrane tubulation. The chain is Pleckstrin homology domain-containing family A member 8 (PLEKHA8) from Bos taurus (Bovine).